Reading from the N-terminus, the 629-residue chain is D-proline reductase proprotein PrdA (629 aa).

C425 acts as the Covalent intermediate with substrate; via pyruvic acid in catalysis. The residue at position 425 (C425) is a Pyruvic acid (Cys).

As to quaternary structure, consists of 3 subunits of 23, 26 and 45 kDa (alpha, gamma and beta respectively). The molecular weight of the complex is approximately 870 kDa, suggesting a decameric structure, if all 3 subunits are present in equal stoichiometry. In terms of processing, the peptide chain is cleaved into beta and alpha chains, and the alpha chain N-terminal cysteine is deaminated and oxidized to form a reactive pyruvoyl group.

The protein resides in the cytoplasm. The catalysed reaction is [PrdC protein]-Se-L-selenocysteinyl-S-L-cysteine + 5-aminopentanoate = [PrdC protein]-L-selenocysteine/L-cysteine + D-proline. Functionally, D-proline reductase catalyzes the reductive cleavage of a C-N bond in D-proline resulting in the formation of 5-aminovalerate. The alpha subunit has been shown to bind D-proline, presumably via the pyruvoyl group. In Acetoanaerobium sticklandii (strain ATCC 12662 / DSM 519 / JCM 1433 / CCUG 9281 / NCIMB 10654 / HF) (Clostridium sticklandii), this protein is D-proline reductase proprotein PrdA (prdA).